The following is a 288-amino-acid chain: Bifunctional protein FolD 1 (288 aa).

Residues 170 to 172 and isoleucine 236 each bind NADP(+); that span reads GPG.

This sequence belongs to the tetrahydrofolate dehydrogenase/cyclohydrolase family. Homodimer.

The enzyme catalyses (6R)-5,10-methylene-5,6,7,8-tetrahydrofolate + NADP(+) = (6R)-5,10-methenyltetrahydrofolate + NADPH. It catalyses the reaction (6R)-5,10-methenyltetrahydrofolate + H2O = (6R)-10-formyltetrahydrofolate + H(+). Its pathway is one-carbon metabolism; tetrahydrofolate interconversion. Functionally, catalyzes the oxidation of 5,10-methylenetetrahydrofolate to 5,10-methenyltetrahydrofolate and then the hydrolysis of 5,10-methenyltetrahydrofolate to 10-formyltetrahydrofolate. The chain is Bifunctional protein FolD 1 from Deinococcus geothermalis (strain DSM 11300 / CIP 105573 / AG-3a).